Consider the following 190-residue polypeptide: MELLKKRILEDGNVFGEDVLKVDSFLNHQIDVKLLNEIGKEFKRRFENKEITKILTIEASGIGIACIAAQYFNVPVVFAKKHQGSNMDENTYESEVFSFTKNKSYKVRVSKKYINTEDKVLIIDDFLANGNAACGLIDIVREANGEVQGVGIVIEKGFQNGRKTIENKGVTVESLAIVESMKNGKVIFKN.

The xanthine site is built by L20 and N27. Residue 128–132 (ANGNA) coordinates 5-phospho-alpha-D-ribose 1-diphosphate. Position 156 (K156) interacts with xanthine.

This sequence belongs to the purine/pyrimidine phosphoribosyltransferase family. Xpt subfamily. As to quaternary structure, homodimer.

The protein resides in the cytoplasm. It carries out the reaction XMP + diphosphate = xanthine + 5-phospho-alpha-D-ribose 1-diphosphate. Its pathway is purine metabolism; XMP biosynthesis via salvage pathway; XMP from xanthine: step 1/1. Its function is as follows. Converts the preformed base xanthine, a product of nucleic acid breakdown, to xanthosine 5'-monophosphate (XMP), so it can be reused for RNA or DNA synthesis. The sequence is that of Xanthine phosphoribosyltransferase from Clostridium novyi (strain NT).